A 1096-amino-acid polypeptide reads, in one-letter code: Cohesin subunit scc-3 (1096 aa).

Over residues 1–21 (MSETPTDQSPQRMSTRNQARV) the composition is skewed to polar residues. Disordered regions lie at residues 1-53 (MSET…KKRA) and 67-106 (NLNNFSTPPKRGRPRGGGLGSARGGRAPMVRRTTTEESAE). Residues 261 to 312 (IELTQSKEKTSKQIEAEKAKLKNNSAGNEKYEALVAQRTQTEERAEEIRQII) are a coiled coil. The 86-residue stretch at 320–405 (FVHRYRDVVP…NKFKDRLVSM (86 aa)) folds into the SCD domain. The tract at residues 1057–1096 (DNMSVRSGMTVTSNATMRSTASSTRGRGRGRGRSRIADDF) is disordered. Residues 1060–1073 (SVRSGMTVTSNATM) are compositionally biased toward polar residues.

Belongs to the SCC3 family. In terms of assembly, component of the cohesin complex, composed of the smc-1 and smc-3 heterodimer attached via their hinge domain, scc-1 which links them, and scc-3. Interacts with scc-1, smc-1 and tim-1. Expressed in gonadal cells.

The protein localises to the nucleus. Its subcellular location is the chromosome. Functionally, component of the cohesin complex, a complex required for the cohesion of sister chromatids after DNA replication. The cohesin complex apparently forms a large proteinaceous ring within which sister chromatids can be trapped. At anaphase, the scc-1 subunit of the complex is cleaved and dissociates from chromatin, allowing sister chromatids to segregate. The cohesin complex may also play a role in spindle pole assembly during mitosis. Plays an essential role in cell division during embryonic development. Required for the assembly of the synaptonemal complex between homologous chromosomes to promote sister chromatid cohesion during mitosis and meiosis. Has a role in stabilization of homologous chromosome associations during meiotic synapsis. Required for chromosome segregation during mitosis and meiosis. Plays a role in DNA double-strand break (DSB) repair during meiotic recombination and promotes the assembly of the 9-1-1 cell-cycle checkpoint response complex which is required for inducing apoptosis in response to DNA damage, at DNA damage sites. The chain is Cohesin subunit scc-3 from Caenorhabditis elegans.